Here is a 338-residue protein sequence, read N- to C-terminus: 1-aminocyclopropane-1-carboxylate deaminase (338 aa).

Lys-51 carries the N6-(pyridoxal phosphate)lysine modification. The active-site Nucleophile is the Ser-78.

This sequence belongs to the ACC deaminase/D-cysteine desulfhydrase family. Homotrimer. Pyridoxal 5'-phosphate serves as cofactor.

The enzyme catalyses 1-aminocyclopropane-1-carboxylate + H2O = 2-oxobutanoate + NH4(+). Its function is as follows. Catalyzes a cyclopropane ring-opening reaction, the irreversible conversion of 1-aminocyclopropane-1-carboxylate (ACC) to ammonia and alpha-ketobutyrate. Allows growth on ACC as a nitrogen source. In Variovorax paradoxus (strain S110), this protein is 1-aminocyclopropane-1-carboxylate deaminase.